Here is a 187-residue protein sequence, read N- to C-terminus: Elongation factor P (187 aa).

The protein belongs to the elongation factor P family.

The protein resides in the cytoplasm. It participates in protein biosynthesis; polypeptide chain elongation. In terms of biological role, involved in peptide bond synthesis. Stimulates efficient translation and peptide-bond synthesis on native or reconstituted 70S ribosomes in vitro. Probably functions indirectly by altering the affinity of the ribosome for aminoacyl-tRNA, thus increasing their reactivity as acceptors for peptidyl transferase. This Corynebacterium urealyticum (strain ATCC 43042 / DSM 7109) protein is Elongation factor P.